The chain runs to 469 residues: 3-phosphoshikimate 1-carboxyvinyltransferase (469 aa).

A disordered region spans residues 21 to 45 (KDTILTHSDQPRPLQSRANGPLTGK). 3 residues coordinate 3-phosphoshikimate: Lys52, Ser53, and Arg57. Residue Lys52 coordinates phosphoenolpyruvate. Positions 125 and 153 each coordinate phosphoenolpyruvate. 4 residues coordinate 3-phosphoshikimate: Ser199, Gln201, Asp352, and Lys379. Position 201 (Gln201) interacts with phosphoenolpyruvate. The active-site Proton acceptor is the Asp352. Arg383 and Arg426 together coordinate phosphoenolpyruvate.

The protein belongs to the EPSP synthase family. In terms of assembly, monomer.

It localises to the cytoplasm. It carries out the reaction 3-phosphoshikimate + phosphoenolpyruvate = 5-O-(1-carboxyvinyl)-3-phosphoshikimate + phosphate. Its pathway is metabolic intermediate biosynthesis; chorismate biosynthesis; chorismate from D-erythrose 4-phosphate and phosphoenolpyruvate: step 6/7. Catalyzes the transfer of the enolpyruvyl moiety of phosphoenolpyruvate (PEP) to the 5-hydroxyl of shikimate-3-phosphate (S3P) to produce enolpyruvyl shikimate-3-phosphate and inorganic phosphate. This chain is 3-phosphoshikimate 1-carboxyvinyltransferase, found in Bradyrhizobium diazoefficiens (strain JCM 10833 / BCRC 13528 / IAM 13628 / NBRC 14792 / USDA 110).